Reading from the N-terminus, the 445-residue chain is MEQQVKDDIQRVFQLQKKQQKALRASTAEQRREKLQRFLDSVIAHEEEIIEAIRKDVRKPYHEVKKAEIEGTKKAIRDNMNNLEQWMAPKEVGSSLSPDANGILMYEPKGVTLILGPWNYPFMLTMAPLAASLAAGNSAIVKLSDFTMNTSNIAAKVIRDAFDEKEVAIFEGEVEVATELLDQPFDHIFFTGSTNVGKIVMTAAAKHLASVTLELGGKSPTIIDSEYDLMDAAKKIAVGKFVNAGQTCIAPDYLFIKKDVQDRFAGILQTVVNAGFMEDDHTPDRSKFTQIVNDRNFNRVKDLFDDAIERGAEVVFGGVFDASDRTISPTVLKNVTPDMKIMQEEIFASILPMMNYEDIDEVIDYVNDRDKPLALYVFSKNQDLIDNVLQHTTSGNAAINDVVVHFSDVNLPFGGVNTSGIGSYHGVYGFKEFSHEKGVFIQAAE.

Catalysis depends on residues E214 and C248.

Belongs to the aldehyde dehydrogenase family.

The enzyme catalyses an aldehyde + NAD(+) + H2O = a carboxylate + NADH + 2 H(+). The chain is Putative aldehyde dehydrogenase AldX (aldX) from Bacillus subtilis (strain 168).